The sequence spans 406 residues: Sorting nexin-6 (406 aa).

N-acetylmethionine is present on Met1. Met2 is modified (N-acetylmethionine; in Sorting nexin-6, N-terminally processed). An interaction with PIM1 region spans residues 2–179 (MEGLDDGPDF…NQDLSVRGKN (178 aa)). Positions 26–173 (LQSDAALQVD…HVFLEYNQDL (148 aa)) constitute a PX domain. Residues 41 to 47 (SERDRVK), 100 to 106 (FDASREK), and 114 to 117 (EGSM) each bind a 1,2-diacyl-sn-glycero-3-phospho-(1D-myo-inositol-4,5-bisphosphate). Ser116 and Ser194 each carry phosphoserine. Positions 182-199 (EKLEDFFKNMVKSADGVI) are membrane-binding amphipathic helix. The region spanning 203–406 (VKDVDDFFEH…NCLAVLNGDT (204 aa)) is the BAR domain.

It belongs to the sorting nexin family. As to quaternary structure, forms heterodimers with BAR domain-containing sorting nexins SNX1 and SNX2. The heterodimers are proposed to self-assemble into helical arrays on the membrane to stabilize and expand local membrane curvature underlying endosomal tubule formation. Thought to be a component of the originally described retromer complex (also called SNX-BAR retromer) which is a pentamer containing the heterotrimeric retromer cargo-selective complex (CSC), also described as vacuolar protein sorting subcomplex (VPS), and a heterodimeric membrane-deforming subcomplex formed between SNX1 or SNX2 and SNX5 or SNX6 (also called SNX-BAR subcomplex); the respective CSC and SNX-BAR subcomplexes associate with low affinity. Interacts with SNX1, SNX2, VPS26A, VPS29, VPS35, TGFB receptors, BACE1, BRMS1, PIP5K1C. Interacts with DCTN1; the association with DCTN1 is involved in movement of retromer-c ontaining vesicles toward the TGN. Interacts with PIM1; translocating SNX6 to the nucleus. Interacts with CDKN1B and GIT1. In terms of processing, in vitro phosphorylated by PIM1; not affecting PIM1-dependent nuclear translocation.

It is found in the early endosome membrane. The protein localises to the cytoplasmic vesicle. It localises to the cytoplasm. Its subcellular location is the nucleus. Involved in several stages of intracellular trafficking. Interacts with membranes phosphatidylinositol 3,4-bisphosphate and/or phosphatidylinositol 4,5-bisphosphate. Acts in part as component of the retromer membrane-deforming SNX-BAR subcomplex. The SNX-BAR retromer mediates retrograde transport of cargo proteins from endosomes to the trans-Golgi network (TGN) and is involved in endosome-to-plasma membrane transport for cargo protein recycling. The SNX-BAR subcomplex functions to deform the donor membrane into a tubular profile called endosome-to-TGN transport carrier (ETC). Does not have in vitro vesicle-to-membrane remodeling activity. Involved in retrograde endosome-to-TGN transport of lysosomal enzyme receptor IGF2R. May function as link between transport vesicles and dynactin. Negatively regulates retrograde transport of BACE1 from the cell surface to the trans-Golgi network. Involved in E-cadherin sorting and degradation; inhibits PIP5K1C-mediated E-cadherin degradation. In association with GIT1 involved in EGFR degradation. Promotes lysosomal degradation of CDKN1B. May contribute to transcription regulation. This is Sorting nexin-6 (Snx6) from Mus musculus (Mouse).